Consider the following 373-residue polypeptide: 4-hydroxy-3-methylbut-2-en-1-yl diphosphate synthase (flavodoxin) (373 aa).

4 residues coordinate [4Fe-4S] cluster: cysteine 270, cysteine 273, cysteine 305, and glutamate 312.

It belongs to the IspG family. The cofactor is [4Fe-4S] cluster.

It carries out the reaction (2E)-4-hydroxy-3-methylbut-2-enyl diphosphate + oxidized [flavodoxin] + H2O + 2 H(+) = 2-C-methyl-D-erythritol 2,4-cyclic diphosphate + reduced [flavodoxin]. Its pathway is isoprenoid biosynthesis; isopentenyl diphosphate biosynthesis via DXP pathway; isopentenyl diphosphate from 1-deoxy-D-xylulose 5-phosphate: step 5/6. In terms of biological role, converts 2C-methyl-D-erythritol 2,4-cyclodiphosphate (ME-2,4cPP) into 1-hydroxy-2-methyl-2-(E)-butenyl 4-diphosphate. The chain is 4-hydroxy-3-methylbut-2-en-1-yl diphosphate synthase (flavodoxin) from Pectobacterium carotovorum subsp. carotovorum (strain PC1).